A 137-amino-acid polypeptide reads, in one-letter code: Peptide methionine sulfoxide reductase MsrB (137 aa).

The MsrB domain occupies 7–129 (AEELKKKLSE…NSASLAFSDE (123 aa)). Zn(2+) contacts are provided by C46, C49, C95, and C98. The active-site Nucleophile is the C118.

Belongs to the MsrB Met sulfoxide reductase family. Requires Zn(2+) as cofactor.

It catalyses the reaction L-methionyl-[protein] + [thioredoxin]-disulfide + H2O = L-methionyl-(R)-S-oxide-[protein] + [thioredoxin]-dithiol. The sequence is that of Peptide methionine sulfoxide reductase MsrB from Salmonella agona (strain SL483).